We begin with the raw amino-acid sequence, 3063 residues long: Collagen alpha-1(XII) chain (3063 aa).

An N-terminal signal peptide occupies residues 1 to 23 (MRSRLPPALAALGAALLLSSIEA). A Fibronectin type-III 1 domain is found at 27–117 (PPSDLNFKII…GQLTIQTGSS (91 aa)). The 177-residue stretch at 140–316 (DLVFLVDGSW…DIQNEIISQV (177 aa)) folds into the VWFA 1 domain. Ser-329 carries an O-linked (Xyl...) (chondroitin sulfate) serine glycan. The Fibronectin type-III 2 domain maps to 336–426 (PPSNLIAMEV…SIMEKTQPMK (91 aa)). Positions 440 to 616 (DIVFLVDGSY…RISFELTQSI (177 aa)) constitute a VWFA 2 domain. Fibronectin type-III domains follow at residues 634 to 722 (PPKD…TEEV), 725 to 816 (APRN…VRGN), 817 to 905 (PRDL…LEER), 907 to 998 (SPQD…LSQD), 999 to 1087 (SKTL…ASRF), and 1089 to 1179 (SPRN…TLSD). Asn-700 carries N-linked (GlcNAc...) asparagine glycosylation. Ser-798 is a glycosylation site (O-linked (Xyl...) (chondroitin sulfate) serine). Residues 799–830 (GPGTPLTGNAATEEVRGNPRDLRVSDPTTSTM) form a disordered region. Basic and acidic residues predominate over residues 811-822 (EEVRGNPRDLRV). The short motif at 862 to 864 (RGD) is the Cell attachment site element. O-linked (Xyl...) (chondroitin sulfate) serine glycosylation is found at Ser-889 and Ser-981. Residues 1077 to 1099 (RQGSGTTASRFKSPRNLKTSDPT) form a disordered region. Residues 1079–1099 (GSGTTASRFKSPRNLKTSDPT) are compositionally biased toward polar residues. Residues 1199–1371 (DIVLLVDGSW…ESLSRIVDDL (173 aa)) enclose the VWFA 3 domain. Fibronectin type-III domains are found at residues 1387 to 1476 (APSN…LPVP), 1477 to 1567 (VVSL…LPLP), 1568 to 1658 (RPQD…VPAP), 1659 to 1754 (TNLK…APKS), 1755 to 1849 (GPRN…TVRN), 1850 to 1935 (LRVY…LMRG), 1936 to 2026 (LARN…LPRS), 2027 to 2117 (GPRN…VGLL), 2118 to 2206 (PPQN…LYLN), and 2207 to 2294 (VTDL…TVKP). Asn-1763 carries N-linked (GlcNAc...) asparagine glycosylation. Asn-2206 carries N-linked (GlcNAc...) asparagine glycosylation. Residues 2283-2312 (GVSVKEHTTVKPTEAPTEPPTPPPPPTIPP) are disordered. Over residues 2299–2311 (TEPPTPPPPPTIP) the composition is skewed to pro residues. A VWFA 4 domain is found at 2323–2496 (DIVFLTDASW…ESFEKIEDNL (174 aa)). The segment at 2451-2746 (SGFSVFVVGV…NSCTCTQDSV (296 aa)) is nonhelical region (NC3). The Laminin G-like domain occupies 2520 to 2712 (GFKMLEAYNL…IQSFDIVCSP (193 aa)). N-linked (GlcNAc...) asparagine glycosylation is found at Asn-2528 and Asn-2679. Disordered regions lie at residues 2743–2896 (QDSV…GDRG) and 2932–3063 (NDYQ…PGSG). Collagen-like domains lie at 2747 to 2798 (GPPG…GPNG), 2802 to 2852 (PGEQ…AMGP), 2853 to 2898 (RGPP…RGDI), and 2941 to 2990 (PGPP…GERG). The tract at residues 2747–2898 (GPPGPPGPAG…KGEKGDRGDI (152 aa)) is triple-helical region (COL2) with 1 imperfection. Residues 2779–2781 (RGD) carry the Cell attachment site motif. The segment covering 2784–2794 (PPGPQGPPGPQ) has biased composition (pro residues). Residues 2817–2826 (PGLPGRTGTP) show a composition bias toward low complexity. Pro residues-rich tracts occupy residues 2828–2837 (LPGPPGPMGP) and 2853–2862 (RGPPGPPGSP). Positions 2864–2874 (SPGVTGPSGKP) are enriched in low complexity. Positions 2895–2897 (RGD) match the Cell attachment site motif. The interval 2899-2941 (ASQNMMRAVARQVCEQLISGQMNRFNQMLNQIPNDYQSSRNQP) is nonhelical region (NC2). The segment covering 2941-2950 (PGPPGPPGPP) has biased composition (pro residues). Residues 2942–3044 (GPPGPPGPPG…RGPPGPPGYC (103 aa)) form a triple-helical region (COL1) with 2 imperfections region. Residues Pro-2944, Pro-2947, Pro-2950, Pro-2959, Pro-2965, Pro-2968, Pro-2971, Pro-2983, Pro-3000, Pro-3003, Pro-3014, Pro-3023, Pro-3026, and Pro-3029 each carry the 4-hydroxyproline modification. The segment covering 2957 to 2966 (GEPGPGGRPG) has biased composition (gly residues). A compositionally biased stretch (low complexity) spans 3006 to 3020 (QGESRTGPPGSTGSR). A nonhelical region (NC1) region spans residues 3045 to 3063 (DSSQCASIPYNGQGYPGSG).

It belongs to the fibril-associated collagens with interrupted helices (FACIT) family. In terms of assembly, trimer of identical chains each containing 190 kDa of non-triple-helical sequences. In terms of processing, the triple-helical tail is stabilized by disulfide bonds at each end. Hydroxylation on proline residues within the sequence motif, GXPG, is most likely to be 4-hydroxy as this fits the requirement for 4-hydroxylation in vertebrates. Post-translationally, isoform 1 O-glycosylation; glycosaminoglycan of chondroitin-sulfate type. As to expression, found in collagen I-containing tissues: both isoform 1 and isoform 2 appear in amnion, chorion, skeletal muscle, small intestine, and in cell culture of dermal fibroblasts, keratinocytes and endothelial cells. Only isoform 2 is found in lung, placenta, kidney and a squamous cell carcinoma cell line. Isoform 1 is also present in the corneal epithelial Bowman's membrane (BM) and the interfibrillar matrix of the corneal stroma, but it is not detected in the limbal BM.

The protein localises to the secreted. It localises to the extracellular space. Its subcellular location is the extracellular matrix. Its function is as follows. Type XII collagen interacts with type I collagen-containing fibrils, the COL1 domain could be associated with the surface of the fibrils, and the COL2 and NC3 domains may be localized in the perifibrillar matrix. This is Collagen alpha-1(XII) chain (COL12A1) from Homo sapiens (Human).